Reading from the N-terminus, the 335-residue chain is Probable nicotianamine synthase 2 (335 aa).

It belongs to the nicotianamine synthase (NAS)-like family.

The catalysed reaction is 3 S-adenosyl-L-methionine = nicotianamine + 3 S-methyl-5'-thioadenosine + 3 H(+). Synthesizes nicotianamine, a polyamine that is the first intermediate in the synthesis of the phytosiderophores of the mugineic acid type found in gramineae which serves as a sensor for the physiological iron status within the plant, and/or might be involved in the transport of iron. The polypeptide is Probable nicotianamine synthase 2 (NAS2) (Hordeum vulgare (Barley)).